The sequence spans 203 residues: Dephospho-CoA kinase (203 aa).

Residues 3-201 (SVGLTGGIGS…QRYLECAAAA (199 aa)) form the DPCK domain. 11–16 (GSGKTT) is an ATP binding site.

The protein belongs to the CoaE family.

The protein localises to the cytoplasm. It catalyses the reaction 3'-dephospho-CoA + ATP = ADP + CoA + H(+). Its pathway is cofactor biosynthesis; coenzyme A biosynthesis; CoA from (R)-pantothenate: step 5/5. Functionally, catalyzes the phosphorylation of the 3'-hydroxyl group of dephosphocoenzyme A to form coenzyme A. This chain is Dephospho-CoA kinase, found in Burkholderia pseudomallei (strain 1710b).